Consider the following 154-residue polypeptide: Probable chemoreceptor glutamine deamidase CheD (154 aa).

It belongs to the CheD family.

It carries out the reaction L-glutaminyl-[protein] + H2O = L-glutamyl-[protein] + NH4(+). Probably deamidates glutamine residues to glutamate on methyl-accepting chemotaxis receptors (MCPs), playing an important role in chemotaxis. The polypeptide is Probable chemoreceptor glutamine deamidase CheD (Methanococcus vannielii (strain ATCC 35089 / DSM 1224 / JCM 13029 / OCM 148 / SB)).